Reading from the N-terminus, the 194-residue chain is FMN-dependent NADH:quinone oxidoreductase 1 (194 aa).

Residues serine 9 and 85–88 contribute to the FMN site; that span reads MYNF.

It belongs to the azoreductase type 1 family. As to quaternary structure, homodimer. FMN serves as cofactor.

It carries out the reaction 2 a quinone + NADH + H(+) = 2 a 1,4-benzosemiquinone + NAD(+). The enzyme catalyses N,N-dimethyl-1,4-phenylenediamine + anthranilate + 2 NAD(+) = 2-(4-dimethylaminophenyl)diazenylbenzoate + 2 NADH + 2 H(+). Its function is as follows. Quinone reductase that provides resistance to thiol-specific stress caused by electrophilic quinones. Also exhibits azoreductase activity. Catalyzes the reductive cleavage of the azo bond in aromatic azo compounds to the corresponding amines. The chain is FMN-dependent NADH:quinone oxidoreductase 1 from Xanthomonas euvesicatoria pv. vesicatoria (strain 85-10) (Xanthomonas campestris pv. vesicatoria).